A 125-amino-acid chain; its full sequence is Holo-[acyl-carrier-protein] synthase (125 aa).

2 residues coordinate Mg(2+): Asp8 and Glu56.

This sequence belongs to the P-Pant transferase superfamily. AcpS family. Requires Mg(2+) as cofactor.

Its subcellular location is the cytoplasm. It carries out the reaction apo-[ACP] + CoA = holo-[ACP] + adenosine 3',5'-bisphosphate + H(+). Its function is as follows. Transfers the 4'-phosphopantetheine moiety from coenzyme A to a Ser of acyl-carrier-protein. In Borrelia hermsii (strain HS1 / DAH), this protein is Holo-[acyl-carrier-protein] synthase.